We begin with the raw amino-acid sequence, 391 residues long: Lipid-A-disaccharide synthase (391 aa).

The protein belongs to the LpxB family.

The enzyme catalyses a lipid X + a UDP-2-N,3-O-bis[(3R)-3-hydroxyacyl]-alpha-D-glucosamine = a lipid A disaccharide + UDP + H(+). Its pathway is bacterial outer membrane biogenesis; LPS lipid A biosynthesis. In terms of biological role, condensation of UDP-2,3-diacylglucosamine and 2,3-diacylglucosamine-1-phosphate to form lipid A disaccharide, a precursor of lipid A, a phosphorylated glycolipid that anchors the lipopolysaccharide to the outer membrane of the cell. The polypeptide is Lipid-A-disaccharide synthase (Azoarcus sp. (strain BH72)).